The following is a 242-amino-acid chain: Biosynthetic peptidoglycan transglycosylase (242 aa).

The chain crosses the membrane as a helical span at residues 19–39; the sequence is LMVVLAIFWGGGIALFSVAPV.

Belongs to the glycosyltransferase 51 family.

The protein resides in the cell inner membrane. It catalyses the reaction [GlcNAc-(1-&gt;4)-Mur2Ac(oyl-L-Ala-gamma-D-Glu-L-Lys-D-Ala-D-Ala)](n)-di-trans,octa-cis-undecaprenyl diphosphate + beta-D-GlcNAc-(1-&gt;4)-Mur2Ac(oyl-L-Ala-gamma-D-Glu-L-Lys-D-Ala-D-Ala)-di-trans,octa-cis-undecaprenyl diphosphate = [GlcNAc-(1-&gt;4)-Mur2Ac(oyl-L-Ala-gamma-D-Glu-L-Lys-D-Ala-D-Ala)](n+1)-di-trans,octa-cis-undecaprenyl diphosphate + di-trans,octa-cis-undecaprenyl diphosphate + H(+). It participates in cell wall biogenesis; peptidoglycan biosynthesis. Its function is as follows. Peptidoglycan polymerase that catalyzes glycan chain elongation from lipid-linked precursors. This chain is Biosynthetic peptidoglycan transglycosylase, found in Escherichia coli O127:H6 (strain E2348/69 / EPEC).